Here is a 68-residue protein sequence, read N- to C-terminus: Large ribosomal subunit protein bL31 (68 aa).

Zn(2+)-binding residues include cysteine 16, cysteine 18, cysteine 37, and cysteine 40.

It belongs to the bacterial ribosomal protein bL31 family. Type A subfamily. Part of the 50S ribosomal subunit. The cofactor is Zn(2+).

In terms of biological role, binds the 23S rRNA. This Acidithiobacillus ferrooxidans (strain ATCC 23270 / DSM 14882 / CIP 104768 / NCIMB 8455) (Ferrobacillus ferrooxidans (strain ATCC 23270)) protein is Large ribosomal subunit protein bL31.